The chain runs to 86 residues: Small ribosomal subunit protein bS18 (86 aa).

The interval 1–20 is disordered; it reads MSREEGNNGRRPGGKMRRSR.

This sequence belongs to the bacterial ribosomal protein bS18 family. Part of the 30S ribosomal subunit. Forms a tight heterodimer with protein bS6.

Functionally, binds as a heterodimer with protein bS6 to the central domain of the 16S rRNA, where it helps stabilize the platform of the 30S subunit. This Clostridium beijerinckii (strain ATCC 51743 / NCIMB 8052) (Clostridium acetobutylicum) protein is Small ribosomal subunit protein bS18.